Reading from the N-terminus, the 552-residue chain is Putative transport protein HAPS_0158 (552 aa).

5 helical membrane-spanning segments follow: residues 4 to 24, 28 to 48, 65 to 85, 95 to 115, and 157 to 177; these read IALT…IGHI, GVSL…HFMT, FGLI…FFAS, AFAV…HKIF, and MGYA…MWLI. RCK C-terminal domains lie at 193–275 and 277–360; these read DSAT…ILGE and VNVS…IIGN. Helical transmembrane passes span 370–390, 393–413, 438–458, 463–483, 492–512, and 532–552; these read MLPI…PIYL, FPVA…LILA, IVLF…NTLL, LAWI…TGLV, YLSL…LAFA, and LVMF…WVAG.

The protein belongs to the AAE transporter (TC 2.A.81) family. YidE subfamily.

Its subcellular location is the cell membrane. The protein is Putative transport protein HAPS_0158 of Glaesserella parasuis serovar 5 (strain SH0165) (Haemophilus parasuis).